The primary structure comprises 159 residues: Ribosome maturation factor RimP (159 aa).

The protein belongs to the RimP family.

It is found in the cytoplasm. Its function is as follows. Required for maturation of 30S ribosomal subunits. The protein is Ribosome maturation factor RimP of Streptococcus pneumoniae (strain 70585).